Here is a 622-residue protein sequence, read N- to C-terminus: Low affinity potassium transport system protein Kup (622 aa).

The next 12 helical transmembrane spans lie at 9-29, 49-69, 103-123, 137-157, 165-185, 213-233, 247-267, 276-296, 337-357, 363-383, 396-416, and 419-439; these read LPAI…TSPL, VFGF…IKYL, VIMG…TPAI, PQLD…LFMI, VGKL…GLGL, VSFI…ALYA, WFTV…ALLL, PFFL…AALA, IYIP…IVSF, LAAA…ILST, FVAL…TANL, and LLSG…VMTT.

Belongs to the HAK/KUP transporter (TC 2.A.72) family.

It is found in the cell inner membrane. The enzyme catalyses K(+)(in) + H(+)(in) = K(+)(out) + H(+)(out). Responsible for the low-affinity transport of potassium into the cell. Likely operates as a K(+):H(+) symporter. This is Low affinity potassium transport system protein Kup from Escherichia coli O157:H7.